We begin with the raw amino-acid sequence, 212 residues long: uncharacterized protein (212 aa).

2 disordered regions span residues M1–L148 and E168–D190. The span at K61–K70 shows a compositional bias: basic and acidic residues. Polar residues predominate over residues D71–L85. Composition is skewed to basic and acidic residues over residues L99–L115, E124–K144, and E168–S180.

This is an uncharacterized protein from Homo sapiens (Human).